The primary structure comprises 411 residues: Multifunctional CCA protein (411 aa).

The ATP site is built by glycine 8 and arginine 11. Residues glycine 8 and arginine 11 each coordinate CTP. The Mg(2+) site is built by aspartate 21 and aspartate 23. The ATP site is built by arginine 91, arginine 137, and arginine 140. CTP contacts are provided by arginine 91, arginine 137, and arginine 140. The 106-residue stretch at 228 to 333 (SGVHTLLVIE…LKVFNALDIW (106 aa)) folds into the HD domain.

This sequence belongs to the tRNA nucleotidyltransferase/poly(A) polymerase family. Bacterial CCA-adding enzyme type 1 subfamily. Monomer. Can also form homodimers and oligomers. Requires Mg(2+) as cofactor. The cofactor is Ni(2+).

It catalyses the reaction a tRNA precursor + 2 CTP + ATP = a tRNA with a 3' CCA end + 3 diphosphate. The catalysed reaction is a tRNA with a 3' CCA end + 2 CTP + ATP = a tRNA with a 3' CCACCA end + 3 diphosphate. Catalyzes the addition and repair of the essential 3'-terminal CCA sequence in tRNAs without using a nucleic acid template. Adds these three nucleotides in the order of C, C, and A to the tRNA nucleotide-73, using CTP and ATP as substrates and producing inorganic pyrophosphate. tRNA 3'-terminal CCA addition is required both for tRNA processing and repair. Also involved in tRNA surveillance by mediating tandem CCA addition to generate a CCACCA at the 3' terminus of unstable tRNAs. While stable tRNAs receive only 3'-terminal CCA, unstable tRNAs are marked with CCACCA and rapidly degraded. The protein is Multifunctional CCA protein of Actinobacillus pleuropneumoniae serotype 5b (strain L20).